The sequence spans 218 residues: Octanoyltransferase (218 aa).

The BPL/LPL catalytic domain maps to 45-218; that stretch reads AGTADELWLL…TDALQRAIYS (174 aa). Residues 84–91, 151–153, and 164–166 each bind substrate; these read RGGQITYH, ALG, and GLA. Cys-182 acts as the Acyl-thioester intermediate in catalysis.

It belongs to the LipB family.

The protein localises to the cytoplasm. It carries out the reaction octanoyl-[ACP] + L-lysyl-[protein] = N(6)-octanoyl-L-lysyl-[protein] + holo-[ACP] + H(+). The protein operates within protein modification; protein lipoylation via endogenous pathway; protein N(6)-(lipoyl)lysine from octanoyl-[acyl-carrier-protein]: step 1/2. In terms of biological role, catalyzes the transfer of endogenously produced octanoic acid from octanoyl-acyl-carrier-protein onto the lipoyl domains of lipoate-dependent enzymes. Lipoyl-ACP can also act as a substrate although octanoyl-ACP is likely to be the physiological substrate. The polypeptide is Octanoyltransferase (Thiobacillus denitrificans (strain ATCC 25259 / T1)).